The chain runs to 442 residues: Histidine--tRNA ligase (442 aa).

Positions 416 to 442 are disordered; the sequence is SGDETTVPVEEFPPEGGEELPTYEDYE. Residues 427-442 are compositionally biased toward acidic residues; that stretch reads FPPEGGEELPTYEDYE.

It belongs to the class-II aminoacyl-tRNA synthetase family.

It localises to the cytoplasm. It carries out the reaction tRNA(His) + L-histidine + ATP = L-histidyl-tRNA(His) + AMP + diphosphate + H(+). The polypeptide is Histidine--tRNA ligase (Halorubrum lacusprofundi (strain ATCC 49239 / DSM 5036 / JCM 8891 / ACAM 34)).